A 561-amino-acid polypeptide reads, in one-letter code: Carboxylesterase 1E (561 aa).

A signal peptide spans 1–18 (MCLYALILVFLAAFTAGG). Asn-79 and Asn-107 each carry an N-linked (GlcNAc...) asparagine glycan. Cys-87 and Cys-116 are oxidised to a cystine. Ser-221 acts as the Acyl-ester intermediate in catalysis. A disulfide bridge links Cys-273 with Cys-284. Residues Glu-353 and His-466 each act as charge relay system in the active site. A glycan (N-linked (GlcNAc...) asparagine) is linked at Asn-489. Positions 558–561 (HTEL) match the Prevents secretion from ER motif.

The protein belongs to the type-B carboxylesterase/lipase family. As to expression, expressed in liver.

It localises to the endoplasmic reticulum lumen. The protein localises to the microsome membrane. It catalyses the reaction a carboxylic ester + H2O = an alcohol + a carboxylate + H(+). The catalysed reaction is all-trans-retinyl hexadecanoate + H2O = all-trans-retinol + hexadecanoate + H(+). Involved in the detoxification of xenobiotics and in the activation of ester and amide prodrugs. Hydrolyzes retinyl esters. This is Carboxylesterase 1E (Ces1e) from Rattus norvegicus (Rat).